The primary structure comprises 545 residues: CTP synthase (545 aa).

Positions 1 to 265 (MSRFIFVTGG…DAIVVEKFGL (265 aa)) are amidoligase domain. S13 contacts CTP. S13 is a UTP binding site. 14-19 (SLGKGI) is an ATP binding site. An L-glutamine-binding site is contributed by Y54. An ATP-binding site is contributed by D71. Residues D71 and E139 each coordinate Mg(2+). Residues 146–148 (DIE), 186–191 (KTKPTQ), and K222 contribute to the CTP site. Residues 186 to 191 (KTKPTQ) and K222 each bind UTP. The Glutamine amidotransferase type-1 domain occupies 290–541 (TVGMVGKYIE…VAAALAEQKA (252 aa)). G351 is an L-glutamine binding site. The Nucleophile; for glutamine hydrolysis role is filled by C378. Residues 379-382 (LGMQ), E402, and R469 contribute to the L-glutamine site. Catalysis depends on residues H514 and E516.

It belongs to the CTP synthase family. As to quaternary structure, homotetramer.

The enzyme catalyses UTP + L-glutamine + ATP + H2O = CTP + L-glutamate + ADP + phosphate + 2 H(+). It catalyses the reaction L-glutamine + H2O = L-glutamate + NH4(+). It carries out the reaction UTP + NH4(+) + ATP = CTP + ADP + phosphate + 2 H(+). It functions in the pathway pyrimidine metabolism; CTP biosynthesis via de novo pathway; CTP from UDP: step 2/2. Allosterically activated by GTP, when glutamine is the substrate; GTP has no effect on the reaction when ammonia is the substrate. The allosteric effector GTP functions by stabilizing the protein conformation that binds the tetrahedral intermediate(s) formed during glutamine hydrolysis. Inhibited by the product CTP, via allosteric rather than competitive inhibition. Its function is as follows. Catalyzes the ATP-dependent amination of UTP to CTP with either L-glutamine or ammonia as the source of nitrogen. Regulates intracellular CTP levels through interactions with the four ribonucleotide triphosphates. This chain is CTP synthase, found in Alcanivorax borkumensis (strain ATCC 700651 / DSM 11573 / NCIMB 13689 / SK2).